The following is a 335-amino-acid chain: Acetyl-coenzyme A carboxylase carboxyl transferase subunit alpha (335 aa).

Residues 40–294 (QLETLATRRR…KEAIEKHLDT (255 aa)) form the CoA carboxyltransferase C-terminal domain.

Belongs to the AccA family. As to quaternary structure, acetyl-CoA carboxylase is a heterohexamer composed of biotin carboxyl carrier protein (AccB), biotin carboxylase (AccC) and two subunits each of ACCase subunit alpha (AccA) and ACCase subunit beta (AccD).

Its subcellular location is the cytoplasm. The enzyme catalyses N(6)-carboxybiotinyl-L-lysyl-[protein] + acetyl-CoA = N(6)-biotinyl-L-lysyl-[protein] + malonyl-CoA. Its pathway is lipid metabolism; malonyl-CoA biosynthesis; malonyl-CoA from acetyl-CoA: step 1/1. Component of the acetyl coenzyme A carboxylase (ACC) complex. First, biotin carboxylase catalyzes the carboxylation of biotin on its carrier protein (BCCP) and then the CO(2) group is transferred by the carboxyltransferase to acetyl-CoA to form malonyl-CoA. This is Acetyl-coenzyme A carboxylase carboxyl transferase subunit alpha from Prochlorococcus marinus (strain MIT 9312).